Here is a 426-residue protein sequence, read N- to C-terminus: 3-phosphoshikimate 1-carboxyvinyltransferase (426 aa).

3-phosphoshikimate-binding residues include Lys-20, Ser-21, and Arg-25. A phosphoenolpyruvate-binding site is contributed by Lys-20. 2 residues coordinate phosphoenolpyruvate: Gly-92 and Arg-120. Residues Ser-165, Gln-167, Asp-313, and Lys-340 each contribute to the 3-phosphoshikimate site. Gln-167 contacts phosphoenolpyruvate. Asp-313 serves as the catalytic Proton acceptor. 2 residues coordinate phosphoenolpyruvate: Arg-344 and Arg-386.

The protein belongs to the EPSP synthase family. Monomer.

The protein localises to the cytoplasm. It carries out the reaction 3-phosphoshikimate + phosphoenolpyruvate = 5-O-(1-carboxyvinyl)-3-phosphoshikimate + phosphate. It functions in the pathway metabolic intermediate biosynthesis; chorismate biosynthesis; chorismate from D-erythrose 4-phosphate and phosphoenolpyruvate: step 6/7. Functionally, catalyzes the transfer of the enolpyruvyl moiety of phosphoenolpyruvate (PEP) to the 5-hydroxyl of shikimate-3-phosphate (S3P) to produce enolpyruvyl shikimate-3-phosphate and inorganic phosphate. The chain is 3-phosphoshikimate 1-carboxyvinyltransferase from Brevibacillus brevis (strain 47 / JCM 6285 / NBRC 100599).